Reading from the N-terminus, the 253-residue chain is MANLGCWMLVLFVATWSDLGLCKKRPKPGGWNTGGSRYPGQGSPGGNRYPPQGGGGWGQPHGGGWGQPHGGGWGQPHGGGWGQPHGGGWGQGGGTHNQWHKPSKPKTSMKHMAGAAAAGAVVGGLGGYMLGSAMSRPLIHFGNDYEDRYYRENMYRYPNQVYYRPVDQYSNQNNFVHDCVNITIKQHTVTTTTKGENFTETDVKMMERVVEQMCITQYEKESQAYYQRGSSMVLFSSPPVILLISFLIFLIVG.

The first 22 residues, 1 to 22 (MANLGCWMLVLFVATWSDLGLC), serve as a signal peptide directing secretion. The tract at residues 23–230 (KKRPKPGGWN…ESQAYYQRGS (208 aa)) is interaction with GRB2, ERI3 and SYN1. The segment at 26-108 (PKPGGWNTGG…WHKPSKPKTS (83 aa)) is disordered. 5 repeat units span residues 51–59 (PQGGGGWGQ), 60–67 (PHGGGWGQ), 68–75 (PHGGGWGQ), 76–83 (PHGGGWGQ), and 84–91 (PHGGGWGQ). The 5 X 8 AA tandem repeats of P-H-G-G-G-W-G-Q stretch occupies residues 51-91 (PQGGGGWGQPHGGGWGQPHGGGWGQPHGGGWGQPHGGGWGQ). Gly residues predominate over residues 52–95 (QGGGGWGQPHGGGWGQPHGGGWGQPHGGGWGQPHGGGWGQGGGT). Cu(2+) is bound by residues His61, Gly62, Gly63, His69, Gly70, Gly71, His77, Gly78, Gly79, His85, Gly86, and Gly87. A compositionally biased stretch (basic residues) spans 98 to 108 (QWHKPSKPKTS). An intrachain disulfide couples Cys179 to Cys214. N-linked (GlcNAc...) asparagine glycosylation is found at Asn181 and Asn197. Ser230 carries GPI-anchor amidated serine lipidation. Positions 231-253 (SMVLFSSPPVILLISFLIFLIVG) are cleaved as a propeptide — removed in mature form.

It belongs to the prion family. In terms of assembly, monomer and homodimer. Has a tendency to aggregate into amyloid fibrils containing a cross-beta spine, formed by a steric zipper of superposed beta-strands. Soluble oligomers may represent an intermediate stage on the path to fibril formation. Copper binding may promote oligomerization. Interacts with GRB2, APP, ERI3/PRNPIP and SYN1. Mislocalized cytosolically exposed PrP interacts with MGRN1; this interaction alters MGRN1 subcellular location and causes lysosomal enlargement. Interacts with KIAA1191.

It localises to the cell membrane. Its subcellular location is the golgi apparatus. Functionally, its primary physiological function is unclear. Has cytoprotective activity against internal or environmental stresses. May play a role in neuronal development and synaptic plasticity. May be required for neuronal myelin sheath maintenance. May play a role in iron uptake and iron homeostasis. Soluble oligomers are toxic to cultured neuroblastoma cells and induce apoptosis (in vitro). Association with GPC1 (via its heparan sulfate chains) targets PRNP to lipid rafts. Also provides Cu(2+) or Zn(2+) for the ascorbate-mediated GPC1 deaminase degradation of its heparan sulfate side chains. In Macaca fascicularis (Crab-eating macaque), this protein is Major prion protein (PRNP).